A 673-amino-acid chain; its full sequence is DNA ligase (673 aa).

NAD(+) is bound by residues 35 to 39, 84 to 85, and Glu115; these read DAEYD and SL. Residue Lys117 is the N6-AMP-lysine intermediate of the active site. 4 residues coordinate NAD(+): Arg138, Glu175, Lys292, and Lys316. Zn(2+) contacts are provided by Cys410, Cys413, Cys428, and Cys434. Residues 592–673 form the BRCT domain; the sequence is PRKLPLQGLV…FLDLLERGRP (82 aa).

This sequence belongs to the NAD-dependent DNA ligase family. LigA subfamily. Requires Mg(2+) as cofactor. Mn(2+) is required as a cofactor.

The catalysed reaction is NAD(+) + (deoxyribonucleotide)n-3'-hydroxyl + 5'-phospho-(deoxyribonucleotide)m = (deoxyribonucleotide)n+m + AMP + beta-nicotinamide D-nucleotide.. Its function is as follows. DNA ligase that catalyzes the formation of phosphodiester linkages between 5'-phosphoryl and 3'-hydroxyl groups in double-stranded DNA using NAD as a coenzyme and as the energy source for the reaction. It is essential for DNA replication and repair of damaged DNA. This is DNA ligase from Methylococcus capsulatus (strain ATCC 33009 / NCIMB 11132 / Bath).